The sequence spans 567 residues: MNILNLKIIMFLLISNIIVVGGAWATSTCPDWPATRIAVEINALEQQLNKWSAAYHQQGHSPVTDDIYDQLQDKLRVWQSCRGLPDKTESQPIPGKGQFLHPVAHTGLKKLKDETALTRWMAGRKNLWVQPKVDGVAVTLVYHGGKLVQLLSRGNGVKGQNWTEKAPFISAIPQYIANAPALLTLQGELFLLMDGHQQAKSGGVNARSTVAGALMRKSPSPLLAQVGVFIWAWPDGPTTMKEKVALLQVMGFPFTAKYSEPVMSHLDVVQWRQFWFQAPLPFVTDGVVVRQEEEPAGRYWQATPGQWSMAWKYPPLQHIAEVKDIHFTLGRTGKGTVVLEVLPIKIDDKWIRRVNIGSVTRWKQWDIAPGDHITLALAGHGIPRLDNVVWRVHQRNTITAPNWDKFHQLSCFQRLPHGCEPQFLSRLIWLSGPGGLDIGGIGGGFWQKLIHHELINDLVGWLLLTPEQIASIPGIGNARAEKIYQQFQRAKQQPFSRWLLALGFPQVVSVDAQWQVVLRRSLSEWATMAGIGQMRAKQIKHFLDHPDVQALADFLSTQKVVGFELTE.

The active-site N6-AMP-lysine intermediate is the lysine 132.

The protein belongs to the NAD-dependent DNA ligase family. LigB subfamily.

The enzyme catalyses NAD(+) + (deoxyribonucleotide)n-3'-hydroxyl + 5'-phospho-(deoxyribonucleotide)m = (deoxyribonucleotide)n+m + AMP + beta-nicotinamide D-nucleotide.. Its function is as follows. Catalyzes the formation of phosphodiester linkages between 5'-phosphoryl and 3'-hydroxyl groups in double-stranded DNA using NAD as a coenzyme and as the energy source for the reaction. This Yersinia pseudotuberculosis serotype IB (strain PB1/+) protein is DNA ligase B.